Consider the following 150-residue polypeptide: Late promoter-activating protein (150 aa).

Its function is as follows. Trans-activating factor involved in the late regulation of the P1 lytic growth cycle. May be the transcriptional activator of all late P1 functions. This Escherichia phage P1 (Bacteriophage P1) protein is Late promoter-activating protein (lpa).